Here is a 1438-residue protein sequence, read N- to C-terminus: DNA polymerase III PolC-type (1438 aa).

Residues 422 to 578 form the Exonuclease domain; sequence YVVFDVETTG…YDTESTAYIF (157 aa).

It belongs to the DNA polymerase type-C family. PolC subfamily.

The protein localises to the cytoplasm. The catalysed reaction is DNA(n) + a 2'-deoxyribonucleoside 5'-triphosphate = DNA(n+1) + diphosphate. Required for replicative DNA synthesis. This DNA polymerase also exhibits 3' to 5' exonuclease activity. The protein is DNA polymerase III PolC-type of Staphylococcus haemolyticus (strain JCSC1435).